The primary structure comprises 68 residues: Small ribosomal subunit protein bS21 (68 aa).

The tract at residues 39–68 (PPSVKRVRKKQESERRHRKERAMRRRMMEE) is disordered. The segment covering 54-68 (RHRKERAMRRRMMEE) has biased composition (basic residues).

This sequence belongs to the bacterial ribosomal protein bS21 family.

The protein is Small ribosomal subunit protein bS21 of Orientia tsutsugamushi (strain Boryong) (Rickettsia tsutsugamushi).